We begin with the raw amino-acid sequence, 155 residues long: Ribosome maturation factor RimP (155 aa).

This sequence belongs to the RimP family.

It is found in the cytoplasm. Required for maturation of 30S ribosomal subunits. This chain is Ribosome maturation factor RimP, found in Parasynechococcus marenigrum (strain WH8102).